Consider the following 123-residue polypeptide: Large ribosomal subunit protein uL14c (123 aa).

The protein belongs to the universal ribosomal protein uL14 family. In terms of assembly, part of the 50S ribosomal subunit.

The protein localises to the plastid. It localises to the chloroplast. In terms of biological role, binds to 23S rRNA. The sequence is that of Large ribosomal subunit protein uL14c from Sorghum bicolor (Sorghum).